A 118-amino-acid polypeptide reads, in one-letter code: Ribulose bisphosphate carboxylase small subunit (118 aa).

The protein belongs to the RuBisCO small chain family. Heterohexadecamer of 8 large and 8 small subunits.

In terms of biological role, ruBisCO catalyzes two reactions: the carboxylation of D-ribulose 1,5-bisphosphate, the primary event in carbon dioxide fixation, as well as the oxidative fragmentation of the pentose substrate. Both reactions occur simultaneously and in competition at the same active site. Although the small subunit is not catalytic it is essential for maximal activity. This is Ribulose bisphosphate carboxylase small subunit from Thiobacillus denitrificans (strain ATCC 25259 / T1).